The primary structure comprises 1479 residues: Chromosome partition protein MukB (1479 aa).

34–41 is a binding site for ATP; it reads GGNGAGKS. Coiled coils occupy residues 337–418, 511–603, 780–810, 847–1116, and 1206–1265; these read LNLV…QYQQ, QAER…RAPV, RAAR…DVQK, ELDR…AKAG, and DDPV…LQAV. The segment at 666-783 is flexible hinge; the sequence is PGGSEDPRLN…EVPLFGRAAR (118 aa).

This sequence belongs to the SMC family. MukB subfamily. Homodimerization via its hinge domain. Binds to DNA via its C-terminal region. Interacts, and probably forms a ternary complex, with MukE and MukF via its C-terminal region. The complex formation is stimulated by calcium or magnesium. Interacts with tubulin-related protein FtsZ.

The protein localises to the cytoplasm. It is found in the nucleoid. In terms of biological role, plays a central role in chromosome condensation, segregation and cell cycle progression. Functions as a homodimer, which is essential for chromosome partition. Involved in negative DNA supercoiling in vivo, and by this means organize and compact chromosomes. May achieve or facilitate chromosome segregation by condensation DNA from both sides of a centrally located replisome during cell division. The chain is Chromosome partition protein MukB from Pectobacterium carotovorum subsp. carotovorum (strain PC1).